The chain runs to 180 residues: Adenine phosphoribosyltransferase (180 aa).

Belongs to the purine/pyrimidine phosphoribosyltransferase family. In terms of assembly, homodimer.

The protein resides in the cytoplasm. The enzyme catalyses AMP + diphosphate = 5-phospho-alpha-D-ribose 1-diphosphate + adenine. It participates in purine metabolism; AMP biosynthesis via salvage pathway; AMP from adenine: step 1/1. Its function is as follows. Catalyzes a salvage reaction resulting in the formation of AMP, that is energically less costly than de novo synthesis. In Marinobacter nauticus (strain ATCC 700491 / DSM 11845 / VT8) (Marinobacter aquaeolei), this protein is Adenine phosphoribosyltransferase.